Here is a 312-residue protein sequence, read N- to C-terminus: Mas-related G-protein coupled receptor member B3 (312 aa).

Residues 1 to 31 (MALRTSLITTTAPDKTSLPISICIIKFQVMN) lie on the Extracellular side of the membrane. The helical transmembrane segment at 32-52 (LLSITISPVGMVLNIIVLWFL) threads the bilayer. The Cytoplasmic portion of the chain corresponds to 53-67 (GFQICRNAFSAYILN). A helical transmembrane segment spans residues 68 to 88 (LAVADFLFLCSHSIFSFLIVC). Over 89-106 (KLHYFLFYIRQLLDTVTM) the chain is Extracellular. A helical membrane pass occupies residues 107-127 (FAYVFGLSITTIISIECCLSI). Topologically, residues 128-140 (MWPIWYHCQRPRH) are cytoplasmic. The chain crosses the membrane as a helical span at residues 141–161 (TSAVICVLLWALSLLFPALQM). Residues 162–180 (EKCSVLFNTFEYSWCGIIN) are Extracellular-facing. The helical transmembrane segment at 181-201 (IISGAWLVVLFVVLCGFSLIL) threads the bilayer. Residues 202–220 (LLRISCGSQQIPVTRLNVT) lie on the Cytoplasmic side of the membrane. Residues 221 to 241 (IALRVLLLLIFGIPFGIFWIV) form a helical membrane-spanning segment. Topologically, residues 242 to 259 (DKWNEENFFVRACGFSHH) are extracellular. A helical membrane pass occupies residues 260-280 (ILYVYCINICVNATIYFLVGS). Topologically, residues 281 to 312 (IRHGKFQKMTLKLILQRAIQGTPEEEGGERGP) are cytoplasmic.

This sequence belongs to the G-protein coupled receptor 1 family. Mas subfamily.

It is found in the membrane. Orphan receptor. Probably involved in the function of nociceptive neurons. May regulate nociceptor function and/or development, including the sensation or modulation of pain. The protein is Mas-related G-protein coupled receptor member B3 (Mrgprb3) of Mus musculus (Mouse).